A 193-amino-acid polypeptide reads, in one-letter code: 3-isopropylmalate dehydratase small subunit (193 aa).

This sequence belongs to the LeuD family. LeuD type 1 subfamily. In terms of assembly, heterodimer of LeuC and LeuD.

It carries out the reaction (2R,3S)-3-isopropylmalate = (2S)-2-isopropylmalate. It participates in amino-acid biosynthesis; L-leucine biosynthesis; L-leucine from 3-methyl-2-oxobutanoate: step 2/4. In terms of biological role, catalyzes the isomerization between 2-isopropylmalate and 3-isopropylmalate, via the formation of 2-isopropylmaleate. In Bacillus thuringiensis subsp. konkukian (strain 97-27), this protein is 3-isopropylmalate dehydratase small subunit.